The following is a 465-amino-acid chain: MVSSQKLEKPIEMGSSEPLPIADGDRRRKKKRRGRATDSLPGKFEDMYKLTSELLGEGAYAKVQGAVSLQNGKEYAVKIIEKQAGHSRSRVFREVETLYQCQGNKNILELIEFFEDDTRFYLVFEKLQGGSILAHIQKQKHFNEREASRVVRDVAAALDFLHTKDKVSLCHLGWSAMAPSGLTAAPTSLGSSDPPTSASQVAGTTGIAHRDLKPENILCESPEKVSPVKICDFDLGSGMKLNNSCTPITTPELTTPCGSAEYMAPEVVEVFTDQATFYDKRCDLWSLGVVLYIMLSGYPPFVGHCGADCGWDRGEVCRVCQNKLFESIQEGKYEFPDKDWAHISSEAKDLISKLLVRDAKQRLSAAQVLQHPWVQGQAPEKGLPTPQVLQRNSSTMDLTLFAAEAIALNRQLSQHEENELAEEPEALADGLCSMKLSPPCKSRLARRRALAQAGRGEDRSPPTAL.

Positions 1-11 (MVSSQKLEKPI) are enriched in basic and acidic residues. The disordered stretch occupies residues 1–40 (MVSSQKLEKPIEMGSSEPLPIADGDRRRKKKRRGRATDSL). Ser-39 bears the Phosphoserine mark. One can recognise a Protein kinase domain in the interval 49 to 374 (KLTSELLGEG…AAQVLQHPWV (326 aa)). ATP is bound by residues 55-63 (LGEGAYAKV) and Lys-78. The span at 185-203 (APTSLGSSDPPTSASQVAG) shows a compositional bias: polar residues. Residues 185–204 (APTSLGSSDPPTSASQVAGT) form a disordered region. Asp-211 functions as the Proton acceptor in the catalytic mechanism. A phosphoserine mark is found at Ser-221 and Ser-226. Phosphothreonine occurs at positions 250, 255, and 385. Residues 446 to 465 (RRRALAQAGRGEDRSPPTAL) form a disordered region. The segment covering 455 to 465 (RGEDRSPPTAL) has biased composition (basic and acidic residues). Ser-460 is subject to Phosphoserine.

It belongs to the protein kinase superfamily. CAMK Ser/Thr protein kinase family. As to quaternary structure, interacts with the C-terminal regions of EIF4G1 and EIF4G2. Also binds to dephosphorylated ERK1 and ERK2, and to the p38 kinases. Mg(2+) serves as cofactor. Dual phosphorylation of Thr-250 and Thr-255 activates the kinase. Phosphorylation of Thr-385 activates the kinase. MAPK3/ERK1 is one of the kinases which activate MKNK1/MNK1. Phosphorylation by PAK2 leads to a reduced phosphorylation of EIF4G1. Ubiquitous.

The protein resides in the cytoplasm. The protein localises to the nucleus. It carries out the reaction L-seryl-[protein] + ATP = O-phospho-L-seryl-[protein] + ADP + H(+). The enzyme catalyses L-threonyl-[protein] + ATP = O-phospho-L-threonyl-[protein] + ADP + H(+). With respect to regulation, phosphorylated and activated by the p38 kinases and kinases in the Erk pathway. Its function is as follows. May play a role in the response to environmental stress and cytokines. Appears to regulate translation by phosphorylating EIF4E, thus increasing the affinity of this protein for the 7-methylguanosine-containing mRNA cap. The protein is MAP kinase-interacting serine/threonine-protein kinase 1 (MKNK1) of Homo sapiens (Human).